The chain runs to 306 residues: Putative F-box protein At1g47300 (306 aa).

Positions 1–45 (MISDSIPKELILEIMLRLPAKSIARFHCVSKQWASMLSRPYFTEL) constitute an F-box domain. The interval 235–278 (DPKLLESKEEEEEEEEEEEEEEEEEEEEEEEEEEEESKEREKEK) is disordered. A compositionally biased stretch (acidic residues) spans 242–270 (KEEEEEEEEEEEEEEEEEEEEEEEEEEEE).

The chain is Putative F-box protein At1g47300 from Arabidopsis thaliana (Mouse-ear cress).